The primary structure comprises 899 residues: Valine--tRNA ligase (899 aa).

Residues 58 to 68 (PNVTGVLHIGH) carry the 'HIGH' region motif. The 'KMSKS' region motif lies at 544 to 548 (KMSKS). Position 547 (K547) interacts with ATP. Residues 836–898 (GTRLHNQRQK…NAELIALGLQ (63 aa)) adopt a coiled-coil conformation.

The protein belongs to the class-I aminoacyl-tRNA synthetase family. ValS type 1 subfamily. Monomer.

The protein resides in the cytoplasm. It catalyses the reaction tRNA(Val) + L-valine + ATP = L-valyl-tRNA(Val) + AMP + diphosphate. Its function is as follows. Catalyzes the attachment of valine to tRNA(Val). As ValRS can inadvertently accommodate and process structurally similar amino acids such as threonine, to avoid such errors, it has a 'posttransfer' editing activity that hydrolyzes mischarged Thr-tRNA(Val) in a tRNA-dependent manner. This is Valine--tRNA ligase from Helicobacter hepaticus (strain ATCC 51449 / 3B1).